The chain runs to 403 residues: RNA-binding motif, single-stranded-interacting protein 1 (403 aa).

A disordered region spans residues 30–56 (PAHPMAPPSPSTTSSNNNSSSSSNSGW). Over residues 40–54 (STTSSNNNSSSSSNS) the composition is skewed to low complexity. RRM domains are found at residues 62-135 (TNLY…MAKQ) and 141-226 (TNLY…FADG). At threonine 208 the chain carries Phosphothreonine.

Its subcellular location is the nucleus. Its function is as follows. Single-stranded DNA binding protein that interacts with the region upstream of the MYC gene. Binds specifically to the DNA sequence motif 5'-[AT]CT[AT][AT]T-3'. Probably has a role in DNA replication. This chain is RNA-binding motif, single-stranded-interacting protein 1, found in Rattus norvegicus (Rat).